Reading from the N-terminus, the 131-residue chain is Large ribosomal subunit protein bL17 (131 aa).

It belongs to the bacterial ribosomal protein bL17 family. In terms of assembly, part of the 50S ribosomal subunit. Contacts protein L32.

In Vesicomyosocius okutanii subsp. Calyptogena okutanii (strain HA), this protein is Large ribosomal subunit protein bL17.